A 1371-amino-acid polypeptide reads, in one-letter code: DNA-directed RNA polymerase subunit beta'' (1371 aa).

The Zn(2+) site is built by C220, C293, C300, and C303.

The protein belongs to the RNA polymerase beta' chain family. RpoC2 subfamily. In plastids the minimal PEP RNA polymerase catalytic core is composed of four subunits: alpha, beta, beta', and beta''. When a (nuclear-encoded) sigma factor is associated with the core the holoenzyme is formed, which can initiate transcription. Requires Zn(2+) as cofactor.

It localises to the plastid. The protein resides in the chloroplast. It carries out the reaction RNA(n) + a ribonucleoside 5'-triphosphate = RNA(n+1) + diphosphate. DNA-dependent RNA polymerase catalyzes the transcription of DNA into RNA using the four ribonucleoside triphosphates as substrates. This chain is DNA-directed RNA polymerase subunit beta'', found in Lobularia maritima (Sweet alyssum).